The following is a 367-amino-acid chain: Mannan endo-1,4-beta-mannosidase (367 aa).

The first 17 residues, 1–17 (MLLTALAVLFASTGCQA), serve as a signal peptide directing secretion. Substrate is bound by residues Trp-79 and Asn-176. Glu-177 acts as the Proton donor in catalysis. A disulfide bond links Cys-192 and Cys-259. The substrate site is built by Trp-205, Trp-240, and Tyr-279. Glu-308 acts as the Nucleophile in catalysis. Trp-337 lines the substrate pocket.

As to quaternary structure, monomer. The disulfide bond between Cys-192 and Cys-259 has not been observed in X-ray crystallography. This may be a consequence of the X-ray radiation.

The catalysed reaction is Random hydrolysis of (1-&gt;4)-beta-D-mannosidic linkages in mannans, galactomannans and glucomannans.. In terms of biological role, hydrolyzes 1,4-beta linked polysaccharide backbones of mannans. Hydrolyzes mannohexaose (M6) preferentially to mannotriose (M4) and less preferentially to mannotetraose (M3), mannopentaose (M5), and mannobiose (M2); hydrolyzes M5 preferentially to M2, and M3, and less preferentially to mannotetraose M4; hydrolyzes M4 preferentially to M3, and less preferentially to mannose (M1), plus very little M2. Does not hydrolyze mannobiose or mannotriose. Does not hydrolyze xlyan, starch, cellulose or galactose. The sequence is that of Mannan endo-1,4-beta-mannosidase from Mytilus edulis (Blue mussel).